The chain runs to 87 residues: Small ribosomal subunit protein bS20 (87 aa).

The tract at residues 1-23 is disordered; that stretch reads MANHKSAIKRHKQSVKRAARNRA.

Belongs to the bacterial ribosomal protein bS20 family.

Binds directly to 16S ribosomal RNA. In Oleidesulfovibrio alaskensis (strain ATCC BAA-1058 / DSM 17464 / G20) (Desulfovibrio alaskensis), this protein is Small ribosomal subunit protein bS20.